The following is a 335-amino-acid chain: Cytoplasmic envelopment protein 2 (335 aa).

This sequence belongs to the herpesviridae cytoplasmic envelopment protein 2 family. In terms of assembly, interacts with cytoplasmic envelopment protein 3 and with the capsid.

Its subcellular location is the virion tegument. It localises to the host cytoplasm. It is found in the host nucleus. Functionally, plays a critical role in cytoplasmic virus egress. Participates in the final step of tegumentation and envelope acquisition within the host cytoplasm by directly interacting with the capsid. Upon virion binding to target cell, a signaling cascade is triggered to disrupt the interaction with the capsid, thereby preparing capsid uncoating. This chain is Cytoplasmic envelopment protein 2 (33), found in Connochaetes taurinus (Blue wildebeest).